We begin with the raw amino-acid sequence, 136 residues long: uncharacterized protein (136 aa).

A signal peptide spans 1–35 (MTHRAVPCQPRAFSKIKVLVISFLFLMVAFLPFSS).

This is an uncharacterized protein from Saccharomyces cerevisiae (strain ATCC 204508 / S288c) (Baker's yeast).